The following is a 398-amino-acid chain: 1-deoxy-D-xylulose 5-phosphate reductoisomerase (398 aa).

NADPH contacts are provided by Thr11, Gly12, Ser13, Ile14, and Asn125. Lys126 lines the 1-deoxy-D-xylulose 5-phosphate pocket. Glu127 contacts NADPH. Asp151 is a Mn(2+) binding site. Positions 152, 153, 186, and 209 each coordinate 1-deoxy-D-xylulose 5-phosphate. A Mn(2+)-binding site is contributed by Glu153. Position 215 (Gly215) interacts with NADPH. The 1-deoxy-D-xylulose 5-phosphate site is built by Ser222, Asn227, Lys228, and Glu231. Position 231 (Glu231) interacts with Mn(2+).

This sequence belongs to the DXR family. Requires Mg(2+) as cofactor. Mn(2+) serves as cofactor.

It carries out the reaction 2-C-methyl-D-erythritol 4-phosphate + NADP(+) = 1-deoxy-D-xylulose 5-phosphate + NADPH + H(+). It functions in the pathway isoprenoid biosynthesis; isopentenyl diphosphate biosynthesis via DXP pathway; isopentenyl diphosphate from 1-deoxy-D-xylulose 5-phosphate: step 1/6. Its function is as follows. Catalyzes the NADPH-dependent rearrangement and reduction of 1-deoxy-D-xylulose-5-phosphate (DXP) to 2-C-methyl-D-erythritol 4-phosphate (MEP). The chain is 1-deoxy-D-xylulose 5-phosphate reductoisomerase from Acinetobacter baumannii (strain ACICU).